The primary structure comprises 141 residues: Large ribosomal subunit protein uL11 (141 aa).

It belongs to the universal ribosomal protein uL11 family. In terms of assembly, part of the ribosomal stalk of the 50S ribosomal subunit. Interacts with L10 and the large rRNA to form the base of the stalk. L10 forms an elongated spine to which L12 dimers bind in a sequential fashion forming a multimeric L10(L12)X complex. Post-translationally, one or more lysine residues are methylated.

In terms of biological role, forms part of the ribosomal stalk which helps the ribosome interact with GTP-bound translation factors. The chain is Large ribosomal subunit protein uL11 from Prochlorococcus marinus (strain MIT 9312).